Consider the following 191-residue polypeptide: Thymidine kinase (191 aa).

ATP-binding positions include 9–16 (GSMNSGKT) and 85–88 (DESQ). Glu86 acts as the Proton acceptor in catalysis. Cys143, Cys146, Cys181, and Cys184 together coordinate Zn(2+).

Belongs to the thymidine kinase family. Homotetramer.

It localises to the cytoplasm. It carries out the reaction thymidine + ATP = dTMP + ADP + H(+). This Listeria monocytogenes serotype 4b (strain F2365) protein is Thymidine kinase.